The chain runs to 301 residues: Elongation factor Ts (301 aa).

The tract at residues 82–85 (TDFV) is involved in Mg(2+) ion dislocation from EF-Tu.

This sequence belongs to the EF-Ts family.

The protein localises to the cytoplasm. In terms of biological role, associates with the EF-Tu.GDP complex and induces the exchange of GDP to GTP. It remains bound to the aminoacyl-tRNA.EF-Tu.GTP complex up to the GTP hydrolysis stage on the ribosome. The chain is Elongation factor Ts from Hyphomonas neptunium (strain ATCC 15444).